We begin with the raw amino-acid sequence, 567 residues long: Probable diguanylate cyclase DgcQ (567 aa).

The next 2 helical transmembrane spans lie at 20–40 (FGPG…STLL) and 357–377 (IALT…WGVI). Residues 425-560 (QPFSVIQLDL…GRNRICASDA (136 aa)) form the GGDEF domain. Mg(2+) is bound at residue aspartate 433. Asparagine 441, histidine 446, and aspartate 450 together coordinate substrate. Glutamate 476 contacts Mg(2+). Glutamate 476 (proton acceptor) is an active-site residue.

Homodimer. Mg(2+) serves as cofactor.

Its subcellular location is the cell inner membrane. The catalysed reaction is 2 GTP = 3',3'-c-di-GMP + 2 diphosphate. Its pathway is glycan metabolism; bacterial cellulose biosynthesis. It participates in purine metabolism; 3',5'-cyclic di-GMP biosynthesis. Its function is as follows. Catalyzes the synthesis of cyclic-di-GMP (c-di-GMP) via the condensation of 2 GTP molecules. Cyclic-di-GMP is a second messenger which controls cell surface-associated traits in bacteria. Involved in the regulation of cellulose production. The chain is Probable diguanylate cyclase DgcQ from Salmonella typhi.